A 294-amino-acid chain; its full sequence is Proteasome subunit beta 1 (294 aa).

Residues 1–65 (MTADRPALRT…MESGDLAPHG (65 aa)) constitute a propeptide, removed in mature form; by autocatalysis. Residue threonine 66 is the Nucleophile of the active site.

Belongs to the peptidase T1B family. The 20S proteasome core is composed of 14 alpha and 14 beta subunits that assemble into four stacked heptameric rings, resulting in a barrel-shaped structure. The two inner rings, each composed of seven catalytic beta subunits, are sandwiched by two outer rings, each composed of seven alpha subunits. All four combinations of alpha- and beta-subunits (beta2-alpha1, beta2-alpha2, beta1-alpha2 and beta1-alpha1) yield fully assembled and proteolytically active proteasomes. The catalytic chamber with the active sites is on the inside of the barrel. Has probably a gated structure, the ends of the cylinder being occluded by the N-termini of the alpha-subunits. Is likely capped by the proteasome-associated ATPase, ARC.

The protein resides in the cytoplasm. It catalyses the reaction Cleavage of peptide bonds with very broad specificity.. It participates in protein degradation; proteasomal Pup-dependent pathway. With respect to regulation, the formation of the proteasomal ATPase ARC-20S proteasome complex, likely via the docking of the C-termini of ARC into the intersubunit pockets in the alpha-rings, may trigger opening of the gate for substrate entry. Interconversion between the open-gate and close-gate conformations leads to a dynamic regulation of the 20S proteasome proteolysis activity. Functionally, component of the proteasome core, a large protease complex with broad specificity involved in protein degradation. The R.erythropolis proteasomes are able to cleave oligopeptides after Tyr, Phe and Leu, very poorly after Arg but not after Glu. Thus, displays chymotrypsin-like activity, low trypsin-like activity but no caspase-like activity. This Rhodococcus erythropolis (Arthrobacter picolinophilus) protein is Proteasome subunit beta 1.